The chain runs to 60 residues: UPF0434 protein Ssed_2824 (60 aa).

It belongs to the UPF0434 family.

This chain is UPF0434 protein Ssed_2824, found in Shewanella sediminis (strain HAW-EB3).